The following is a 288-amino-acid chain: Bifunctional protein FolD (288 aa).

Residues 166–168, Ser-191, and Ile-232 contribute to the NADP(+) site; that span reads GRS.

It belongs to the tetrahydrofolate dehydrogenase/cyclohydrolase family. Homodimer.

It catalyses the reaction (6R)-5,10-methylene-5,6,7,8-tetrahydrofolate + NADP(+) = (6R)-5,10-methenyltetrahydrofolate + NADPH. It carries out the reaction (6R)-5,10-methenyltetrahydrofolate + H2O = (6R)-10-formyltetrahydrofolate + H(+). Its pathway is one-carbon metabolism; tetrahydrofolate interconversion. Its function is as follows. Catalyzes the oxidation of 5,10-methylenetetrahydrofolate to 5,10-methenyltetrahydrofolate and then the hydrolysis of 5,10-methenyltetrahydrofolate to 10-formyltetrahydrofolate. The polypeptide is Bifunctional protein FolD (Rickettsia rickettsii (strain Iowa)).